We begin with the raw amino-acid sequence, 847 residues long: FAST kinase domain-containing protein 1, mitochondrial (847 aa).

At Lys-360 the chain carries N6-acetyllysine. Residues 777-837 form the RAP domain; the sequence is IALEFLDSKA…KDARMDYLRE (61 aa).

The protein belongs to the FAST kinase family. As to expression, expression detected in spleen, thymus, testis, ovary, colon, heart, smooth muscle, kidney, brain, lung, liver and white adipose tissue with highest expression in heart.

It is found in the mitochondrion. Functionally, involved in the down-regulation of mitochondrial MT-ND3 mRNA levels which leads to decreased respiratory complex I abundance and activity. This is FAST kinase domain-containing protein 1, mitochondrial (FASTKD1) from Homo sapiens (Human).